The following is a 259-amino-acid chain: ATP synthase subunit a (259 aa).

The propeptide at 1-7 (MTNNYIN) is removed in mature form. Helical transmembrane passes span 36–56 (FSLY…LSIG), 95–115 (YVPL…IGMV), 125–145 (LIYI…LGLF), 164–206 (LVPV…NLVK), and 211–253 (INYF…SYLK).

As to quaternary structure, F-type ATP synthases have 2 components, the catalytic core F(1) and the membrane-embedded component F(0), linked together by a central stalk and a peripheral stalk. The central stalk, also called rotor shaft, is often seen as part of F(1). The peripheral stalk is seen as part of F(0). F(0) contains the membrane channel next to the rotor. F-type ATP synthases form dimers but each monomer functions independently in ATP generation. The dimer consists of 18 different polypeptides: ATP1 (subunit alpha, part of F(1), 3 molecules per monomer), ATP2 (subunit beta, part of F(1), 3 molecules per monomer), ATP3 (subunit gamma, part of the central stalk), ATP4 (subunit b, part of the peripheral stalk), ATP5/OSCP (subunit 5/OSCP, part of the peripheral stalk), ATP6 (subunit a, part of the peripheral stalk), ATP7 (subunit d, part of the peripheral stalk), ATP8 (subunit 8, part of the peripheral stalk), OLI1 (subunit c, part of the rotor, 10 molecules per monomer), ATP14 (subunit h, part of the peripheral stalk), ATP15 (subunit epsilon, part of the central stalk), ATP16 (subunit delta, part of the central stalk), ATP17 (subunit f, part of the peripheral stalk), ATP18 (subunit i/j, part of the peripheral stalk). Dimer-specific subunits are ATP19 (subunit k, at interface between monomers), ATP20 (subunit g, at interface between monomers), TIM11 (subunit e, at interface between monomers). Also contains subunit L.

The protein localises to the mitochondrion inner membrane. Mitochondrial membrane ATP synthase (F(1)F(0) ATP synthase or Complex V) produces ATP from ADP in the presence of a proton gradient across the membrane which is generated by electron transport complexes of the respiratory chain. F-type ATP synthases consist of two structural domains, F(1) - containing the extramembraneous catalytic core, and F(0) - containing the membrane proton channel, linked together by a central stalk and a peripheral stalk. During catalysis, ATP synthesis in the catalytic domain of F(1) is coupled via a rotary mechanism of the central stalk subunits to proton translocation. Key component of the proton channel; it may play a direct role in the translocation of protons across the membrane. This is ATP synthase subunit a from Pichia angusta (Yeast).